Reading from the N-terminus, the 353-residue chain is Photosystem II D2 protein (353 aa).

Threonine 2 bears the N-acetylthreonine mark. The residue at position 2 (threonine 2) is a Phosphothreonine. Residues 41–61 (CAYFALGGWFTGTTFVTSWYT) form a helical membrane-spanning segment. Histidine 118 serves as a coordination point for chlorophyll a. The chain crosses the membrane as a helical span at residues 125-141 (GFMLRQFELARSVQLRP). Residues glutamine 130 and asparagine 143 each contribute to the pheophytin a site. A helical membrane pass occupies residues 153 to 166 (VFVSVFLIYPLGQS). Histidine 198 provides a ligand contact to chlorophyll a. Residues 208–228 (AALLCAIHGATVENTLFEDGD) form a helical membrane-spanning segment. Residues histidine 215 and phenylalanine 262 each contribute to the a plastoquinone site. Fe cation is bound at residue histidine 215. Histidine 269 provides a ligand contact to Fe cation. Residues 279–295 (GLWMSALGVVGLALNLR) form a helical membrane-spanning segment.

It belongs to the reaction center PufL/M/PsbA/D family. PSII is composed of 1 copy each of membrane proteins PsbA, PsbB, PsbC, PsbD, PsbE, PsbF, PsbH, PsbI, PsbJ, PsbK, PsbL, PsbM, PsbT, PsbX, PsbY, PsbZ, Psb30/Ycf12, at least 3 peripheral proteins of the oxygen-evolving complex and a large number of cofactors. It forms dimeric complexes. It depends on The D1/D2 heterodimer binds P680, chlorophylls that are the primary electron donor of PSII, and subsequent electron acceptors. It shares a non-heme iron and each subunit binds pheophytin, quinone, additional chlorophylls, carotenoids and lipids. There is also a Cl(-1) ion associated with D1 and D2, which is required for oxygen evolution. The PSII complex binds additional chlorophylls, carotenoids and specific lipids. as a cofactor.

Its subcellular location is the plastid. The protein resides in the chloroplast thylakoid membrane. It catalyses the reaction 2 a plastoquinone + 4 hnu + 2 H2O = 2 a plastoquinol + O2. Photosystem II (PSII) is a light-driven water:plastoquinone oxidoreductase that uses light energy to abstract electrons from H(2)O, generating O(2) and a proton gradient subsequently used for ATP formation. It consists of a core antenna complex that captures photons, and an electron transfer chain that converts photonic excitation into a charge separation. The D1/D2 (PsbA/PsbD) reaction center heterodimer binds P680, the primary electron donor of PSII as well as several subsequent electron acceptors. D2 is needed for assembly of a stable PSII complex. The chain is Photosystem II D2 protein from Populus trichocarpa (Western balsam poplar).